The chain runs to 185 residues: TATA-box-binding protein (185 aa).

A run of 2 repeats spans residues I8–L84 and I99–L175.

Belongs to the TBP family.

Functionally, general factor that plays a role in the activation of archaeal genes transcribed by RNA polymerase. Binds specifically to the TATA box promoter element which lies close to the position of transcription initiation. The polypeptide is TATA-box-binding protein (Thermococcus sibiricus (strain DSM 12597 / MM 739)).